Reading from the N-terminus, the 192-residue chain is Orotate phosphoribosyltransferase (192 aa).

A 5-phospho-alpha-D-ribose 1-diphosphate-binding site is contributed by 116-124; that stretch reads EDIVTTGLS. Orotate contacts are provided by Thr120 and Arg148.

This sequence belongs to the purine/pyrimidine phosphoribosyltransferase family. PyrE subfamily. In terms of assembly, homodimer. The cofactor is Mg(2+).

The enzyme catalyses orotidine 5'-phosphate + diphosphate = orotate + 5-phospho-alpha-D-ribose 1-diphosphate. The protein operates within pyrimidine metabolism; UMP biosynthesis via de novo pathway; UMP from orotate: step 1/2. In terms of biological role, catalyzes the transfer of a ribosyl phosphate group from 5-phosphoribose 1-diphosphate to orotate, leading to the formation of orotidine monophosphate (OMP). The sequence is that of Orotate phosphoribosyltransferase from Bartonella tribocorum (strain CIP 105476 / IBS 506).